Reading from the N-terminus, the 301-residue chain is Protoheme IX farnesyltransferase (301 aa).

The next 9 membrane-spanning stretches (helical) occupy residues 29-49, 51-71, 96-118, 123-143, 151-171, 177-197, 223-243, 244-264, and 281-301; these read VVAL…PGVV, IVPL…AAAF, VSIA…VLYV, LTAW…TAYL, IVVG…AVTG, ALLL…ALAI, CIFL…LVGM, CGPV…YKAW, and FSIY…YLWL.

The protein belongs to the UbiA prenyltransferase family. Protoheme IX farnesyltransferase subfamily.

Its subcellular location is the cell inner membrane. It carries out the reaction heme b + (2E,6E)-farnesyl diphosphate + H2O = Fe(II)-heme o + diphosphate. Its pathway is porphyrin-containing compound metabolism; heme O biosynthesis; heme O from protoheme: step 1/1. Functionally, converts heme B (protoheme IX) to heme O by substitution of the vinyl group on carbon 2 of heme B porphyrin ring with a hydroxyethyl farnesyl side group. The chain is Protoheme IX farnesyltransferase from Shewanella halifaxensis (strain HAW-EB4).